A 209-amino-acid chain; its full sequence is MGGKWSKSSIVGWPKIRERIRRTPPTETGVGAVSQDAVSQDLDKCGAAASSSPAANNASCEPPEEEEEVGFPVRPQVPLRPMTYKGAFDLSHFLKEKGGLDGLVWSPKRQEILDLWVYHTQGYFPDWQNYTPGPGIRFPLTFGWCFKLVPMSPEEVEEANEGENNCLLHPISQHGMEDAEREVLKWKFDSSLALRHRAREQHPEYYKDC.

G2 is lipidated: N-myristoyl glycine; by host. Residue S6 is modified to Phosphoserine; by host. Disordered regions lie at residues 16-35 (IRER…AVSQ) and 43-71 (DKCG…EVGF). Low complexity predominate over residues 47-61 (AAASSSPAANNASCE). An acidic; interacts with host PACS1 and PACS2; stabilizes the interaction of NEF/MHC-I with host AP1M1; necessary for MHC-I internalization region spans residues 65 to 68 (EEEE). The interval 72 to 81 (PVRPQVPLRP) is SH3-binding; interaction with Src family tyrosine kinases. A PxxP; stabilizes the interaction of NEF/MHC-I with host AP1M1; necessary for MHC-I internalization motif is present at residues 75–78 (PQVP). The interval 111-127 (EILDLWVYHTQGYFPDW) is mediates dimerization, Nef-PTE1 interaction. Residues 151–183 (MSPEEVEEANEGENNCLLHPISQHGMEDAEREV) form a binding to ATP6V1H region. Residues 167–168 (LL) carry the Dileucine internalization motif; necessary for CD4 internalization motif. The short motif at 177–178 (ED) is the Diacidic; necessary for CD4 internalization element.

It belongs to the lentivirus primate group Nef protein family. As to quaternary structure, monomer; cytosolic form. Homodimer; membrane bound form. Interacts with Nef associated p21-activated kinase (PAK2); this interaction activates PAK2. Associates with the Nef-MHC-I-AP1 complex; this complex is required for MHC-I internalization. Interacts (via C-terminus) with host PI3-kinase. Interacts with host PACS1; this interaction seems to be weak. Interacts with host PACS2. Interacts with host LCK and MAPK3; these interactions inhibit the kinase activity of the latter. Interacts with host ATP6V1H; this interaction may play a role in CD4 endocytosis. Associates with the CD4-Nef-AP2 complex; this complex is required for CD4 internalization. Interacts with host AP2 subunit alpha and AP2 subunit sigma2. Interacts with TCR-zeta chain; this interaction up-regulates the Fas ligand (FasL) surface expression. Interacts with host HCK, LYN, and SRC; these interactions activate the Src family kinases. Interacts with MAP3K5; this interaction inhibits the Fas and TNFR-mediated death signals. Interacts with beta-COP and PTE1. Interacts with human RACK1; this increases Nef phosphorylation by PKC. Interacts with TP53; this interaction decreases the half-life of TP53, protecting the infected cell against p53-mediated apoptosis. In terms of processing, the virion-associated Nef proteins are cleaved by the viral protease to release the soluble C-terminal core protein. Nef is probably cleaved concomitantly with viral structural proteins on maturation of virus particles. Myristoylated. Post-translationally, phosphorylated on serine residues, probably by host PKCdelta and theta.

The protein localises to the host cell membrane. Its subcellular location is the virion. It localises to the secreted. The protein resides in the host Golgi apparatus membrane. Its function is as follows. Factor of infectivity and pathogenicity, required for optimal virus replication. Alters numerous pathways of T-lymphocyte function and down-regulates immunity surface molecules in order to evade host defense and increase viral infectivity. Alters the functionality of other immunity cells, like dendritic cells, monocytes/macrophages and NK cells. Functionally, in infected CD4(+) T-lymphocytes, down-regulates the surface MHC-I, mature MHC-II, CD4, CD28, CCR5 and CXCR4 molecules. Mediates internalization and degradation of host CD4 through the interaction of with the cytoplasmic tail of CD4, the recruitment of AP-2 (clathrin adapter protein complex 2), internalization through clathrin coated pits, and subsequent transport to endosomes and lysosomes for degradation. Diverts host MHC-I molecules to the trans-Golgi network-associated endosomal compartments by an endocytic pathway to finally target them for degradation. MHC-I down-regulation may involve AP-1 (clathrin adapter protein complex 1) or possibly Src family kinase-ZAP70/Syk-PI3K cascade recruited by PACS2. In consequence infected cells are masked for immune recognition by cytotoxic T-lymphocytes. Decreasing the number of immune receptors also prevents reinfection by more HIV particles (superinfection). Down-regulates host SERINC3 and SERINC5 thereby excluding these proteins from the viral particles. Virion infectivity is drastically higher when SERINC3 or SERINC5 are excluded from the viral envelope, because these host antiviral proteins impair the membrane fusion event necessary for subsequent virion penetration. Bypasses host T-cell signaling by inducing a transcriptional program nearly identical to that of anti-CD3 cell activation. Interaction with TCR-zeta chain up-regulates the Fas ligand (FasL). Increasing surface FasL molecules and decreasing surface MHC-I molecules on infected CD4(+) cells send attacking cytotoxic CD8+ T-lymphocytes into apoptosis. In terms of biological role, plays a role in optimizing the host cell environment for viral replication without causing cell death by apoptosis. Protects the infected cells from apoptosis in order to keep them alive until the next virus generation is ready to strike. Inhibits the Fas and TNFR-mediated death signals by blocking MAP3K5/ASK1. Decreases the half-life of TP53, protecting the infected cell against p53-mediated apoptosis. Inhibits the apoptotic signals regulated by the Bcl-2 family proteins through the formation of a Nef/PI3-kinase/PAK2 complex that leads to activation of PAK2 and induces phosphorylation of host BAD. Its function is as follows. Extracellular Nef protein targets CD4(+) T-lymphocytes for apoptosis by interacting with CXCR4 surface receptors. The sequence is that of Protein Nef from Human immunodeficiency virus type 1 group M subtype A (isolate MAL) (HIV-1).